Here is a 678-residue protein sequence, read N- to C-terminus: Dihydroxyacetone phosphate acyltransferase (678 aa).

Residues Ser12 and Ser17 each carry the phosphoserine modification. The short motif at 161–166 (HRSYID) is the HXXXXD motif element. Lys641 carries the post-translational modification N6-acetyllysine. The Microbody targeting signal signature appears at 676–678 (AKL).

The protein belongs to the GPAT/DAPAT family. As to quaternary structure, part of a heterotrimeric complex composed of GNPAT, AGPS and a modified form of GNPAT. Highly expressed in liver and testis. Lower levels in heart, brain, lung and kidney. Detected in spleen.

The protein resides in the peroxisome membrane. The catalysed reaction is dihydroxyacetone phosphate + an acyl-CoA = a 1-acylglycerone 3-phosphate + CoA. It carries out the reaction dihydroxyacetone phosphate + hexadecanoyl-CoA = 1-hexadecanoylglycerone 3-phosphate + CoA. Its pathway is membrane lipid metabolism; glycerophospholipid metabolism. Its function is as follows. Dihydroxyacetonephosphate acyltransferase catalyzing the first step in the biosynthesis of plasmalogens, a subset of phospholipids that differ from other glycerolipids by having an alkyl chain attached through a vinyl ether linkage at the sn-1 position of the glycerol backbone, and which unique physical properties have an impact on various aspects of cell signaling and membrane biology. The chain is Dihydroxyacetone phosphate acyltransferase from Mus musculus (Mouse).